The following is a 225-amino-acid chain: Uridine kinase (225 aa).

12-19 is an ATP binding site; that stretch reads GGTGAGKT.

This sequence belongs to the uridine kinase family.

The protein localises to the cytoplasm. The catalysed reaction is uridine + ATP = UMP + ADP + H(+). It catalyses the reaction cytidine + ATP = CMP + ADP + H(+). It functions in the pathway pyrimidine metabolism; CTP biosynthesis via salvage pathway; CTP from cytidine: step 1/3. It participates in pyrimidine metabolism; UMP biosynthesis via salvage pathway; UMP from uridine: step 1/1. This is Uridine kinase from Halobacterium salinarum (strain ATCC 700922 / JCM 11081 / NRC-1) (Halobacterium halobium).